The chain runs to 299 residues: RGG repeats nuclear RNA binding protein A (299 aa).

Positions R1–R21 are enriched in gly residues. Disordered stretches follow at residues R1–T173 and E232–K299. Over residues R45–G60 the composition is skewed to basic and acidic residues. The span at G61–N78 shows a compositional bias: gly residues. 2 stretches are compositionally biased toward basic and acidic residues: residues E86–S98 and D134–G146. Positions E88–S98 match the Arginine-rich RNA-binding motif E-R-P-R-R-X-[F/Y]-[E/D]-R-R-S motif. Residues R267 to G278 show a composition bias toward gly residues.

This sequence belongs to the SERBP1-HABP4 family. In terms of tissue distribution, expressed in seedlings but not in roots.

It is found in the nucleus. It localises to the cytoplasm. The protein resides in the perinuclear region. Its function is as follows. Ribosome-binding protein that acts as a regulator of mRNA translation by promoting ribosome inactivation. Binds RNA. The protein is RGG repeats nuclear RNA binding protein A of Nicotiana tabacum (Common tobacco).